Here is an 808-residue protein sequence, read N- to C-terminus: Anaphase-promoting complex subunit 4 (808 aa).

Phosphotyrosine is present on Y469. S757 and S758 each carry phosphoserine. K772 participates in a covalent cross-link: Glycyl lysine isopeptide (Lys-Gly) (interchain with G-Cter in SUMO2). S777 and S779 each carry phosphoserine. Residue K798 forms a Glycyl lysine isopeptide (Lys-Gly) (interchain with G-Cter in SUMO2) linkage.

This sequence belongs to the APC4 family. In terms of assembly, the mammalian APC/C is composed at least of 14 distinct subunits ANAPC1, ANAPC2, CDC27/APC3, ANAPC4, ANAPC5, CDC16/APC6, ANAPC7, CDC23/APC8, ANAPC10, ANAPC11, CDC26/APC12, ANAPC13, ANAPC15 and ANAPC16 that assemble into a complex of at least 19 chains with a combined molecular mass of around 1.2 MDa; APC/C interacts with FZR1 and FBXO5. In the context of the APC/C complex, directly interacts with UBE2S. Interacts with FBXO43.

It localises to the nucleus. Its pathway is protein modification; protein ubiquitination. In terms of biological role, component of the anaphase promoting complex/cyclosome (APC/C), a cell cycle-regulated E3 ubiquitin ligase that controls progression through mitosis and the G1 phase of the cell cycle. The APC/C complex acts by mediating ubiquitination and subsequent degradation of target proteins: it mainly mediates the formation of 'Lys-11'-linked polyubiquitin chains and, to a lower extent, the formation of 'Lys-48'- and 'Lys-63'-linked polyubiquitin chains. The APC/C complex catalyzes assembly of branched 'Lys-11'-/'Lys-48'-linked branched ubiquitin chains on target proteins. This Homo sapiens (Human) protein is Anaphase-promoting complex subunit 4 (ANAPC4).